Consider the following 385-residue polypeptide: Acetate kinase (385 aa).

Residue N9 coordinates Mg(2+). ATP is bound at residue K16. R87 is a binding site for substrate. Residue D144 is the Proton donor/acceptor of the active site. ATP-binding positions include 202-206 (HLGSG) and 277-279 (DIR). E373 is a Mg(2+) binding site.

It belongs to the acetokinase family. Homodimer. The cofactor is Mg(2+). Requires Mn(2+) as cofactor.

It localises to the cytoplasm. The enzyme catalyses acetate + ATP = acetyl phosphate + ADP. Its pathway is metabolic intermediate biosynthesis; acetyl-CoA biosynthesis; acetyl-CoA from acetate: step 1/2. Catalyzes the formation of acetyl phosphate from acetate and ATP. Can also catalyze the reverse reaction. This is Acetate kinase from Rickettsia akari (strain Hartford).